Consider the following 364-residue polypeptide: Probable tartrate dehydrogenase/decarboxylase TtuC (364 aa).

Residues D222, D246, and D250 each contribute to the Mn(2+) site.

Belongs to the isocitrate and isopropylmalate dehydrogenases family. Requires Mg(2+) as cofactor. It depends on Mn(2+) as a cofactor. K(+) is required as a cofactor.

It localises to the cytoplasm. It catalyses the reaction tartrate + NAD(+) = 2-hydroxy-3-oxosuccinate + NADH + H(+). It carries out the reaction (2R,3S)-tartrate + NAD(+) = 2-hydroxy-3-oxosuccinate + NADH + H(+). The catalysed reaction is (2R,3R)-tartrate + NAD(+) = 2-hydroxy-3-oxosuccinate + NADH + H(+). The enzyme catalyses (2R,3R)-tartrate + H(+) = (R)-glycerate + CO2. It catalyses the reaction (R)-malate + NAD(+) = pyruvate + CO2 + NADH. It functions in the pathway carbohydrate acid metabolism; tartrate degradation; 2-hydroxy-3-oxosuccinate from L-tartrate: step 1/1. Its pathway is carbohydrate acid metabolism; tartrate degradation; 2-hydroxy-3-oxosuccinate from meso-tartrate: step 1/1. The protein operates within carbohydrate acid metabolism; tartrate degradation; D-glycerate from L-tartrate: step 1/1. In terms of biological role, has multiple catalytic activities. Apart from catalyzing the oxidation of (+)-tartrate to oxaloglycolate, also converts meso-tartrate to D-glycerate and catalyzes the oxidative decarboxylation of D-malate to pyruvate. The protein is Probable tartrate dehydrogenase/decarboxylase TtuC (ttuC) of Agrobacterium vitis (Rhizobium vitis).